A 515-amino-acid polypeptide reads, in one-letter code: MVVAYKHEPFTDFSVEANKLAFEEGLKKVESYLGQDYPLIIGGEKITTEDKIVSVNPANKEELVGRVSKASRELAEKAMQVADETFQTWRKSKPEMRADILFRAAAIVRRRKHEFSAILVKEAGKPWNEADADTAEAIDFMEYYGRQMLKLKDGIPVESRPIEYNRFSYIPLGVGVIISPWNFPFAIMAGMTTAALVSGNTVLLKPASTTPVVAAKFMEVLEEAGLPAGVVNFVPGSGSEVGDYLVDHPRTRFISFTGSRDVGIRIYERAAKVNPGQIWLKRVIAEMGGKDTIVVDKEADLELAAKSIVASAFGFSGQKCSACSRAVIHEDVYDHVLNRAVELTKELTVANPAVLGTNMGPVNDQAAFDKVMSYVAIGKEEGRILAGGEGDDSKGWFIQPTIVADVAEDARLMKEEIFGPVVAFCKAKDFDHALAIANNTEYGLTGAVISNNRDHIEKAREDFHVGNLYFNRGCTGAIVGYQPFGGFNMSGTDSKAGGPDYLALHMQAKTTSETL.

Active-site residues include glutamate 286 and cysteine 320.

Belongs to the aldehyde dehydrogenase family. RocA subfamily.

The enzyme catalyses L-glutamate 5-semialdehyde + NAD(+) + H2O = L-glutamate + NADH + 2 H(+). It participates in amino-acid degradation; L-proline degradation into L-glutamate; L-glutamate from L-proline: step 2/2. The sequence is that of 1-pyrroline-5-carboxylate dehydrogenase from Bacillus cereus (strain ATCC 10987 / NRS 248).